We begin with the raw amino-acid sequence, 303 residues long: Peptidyl-prolyl isomerase CWC27 (303 aa).

Positions Ala7–Gly153 constitute a PPIase cyclophilin-type domain. Disordered regions lie at residues Ser155 to Asp195 and Glu208 to Ala274.

This sequence belongs to the cyclophilin-type PPIase family. CWC27 subfamily. As to quaternary structure, associated with the spliceosome.

Its subcellular location is the cytoplasm. The protein resides in the nucleus. The catalysed reaction is [protein]-peptidylproline (omega=180) = [protein]-peptidylproline (omega=0). Its function is as follows. PPIases accelerate the folding of proteins. It catalyzes the cis-trans isomerization of proline imidic peptide bonds in oligopeptides. Involved in pre-mRNA splicing. This Eremothecium gossypii (strain ATCC 10895 / CBS 109.51 / FGSC 9923 / NRRL Y-1056) (Yeast) protein is Peptidyl-prolyl isomerase CWC27 (CWC27).